Consider the following 158-residue polypeptide: Ribosome maturation factor RimP (158 aa).

This sequence belongs to the RimP family.

It is found in the cytoplasm. Required for maturation of 30S ribosomal subunits. This Leuconostoc mesenteroides subsp. mesenteroides (strain ATCC 8293 / DSM 20343 / BCRC 11652 / CCM 1803 / JCM 6124 / NCDO 523 / NBRC 100496 / NCIMB 8023 / NCTC 12954 / NRRL B-1118 / 37Y) protein is Ribosome maturation factor RimP.